The primary structure comprises 103 residues: Large ribosomal subunit protein bL21 (103 aa).

The protein belongs to the bacterial ribosomal protein bL21 family. Part of the 50S ribosomal subunit. Contacts protein L20.

In terms of biological role, this protein binds to 23S rRNA in the presence of protein L20. The polypeptide is Large ribosomal subunit protein bL21 (Mycobacterium marinum (strain ATCC BAA-535 / M)).